Here is a 94-residue protein sequence, read N- to C-terminus: Phosphoribosyl-ATP pyrophosphatase (94 aa).

The protein belongs to the PRA-PH family.

It is found in the cytoplasm. It catalyses the reaction 1-(5-phospho-beta-D-ribosyl)-ATP + H2O = 1-(5-phospho-beta-D-ribosyl)-5'-AMP + diphosphate + H(+). It functions in the pathway amino-acid biosynthesis; L-histidine biosynthesis; L-histidine from 5-phospho-alpha-D-ribose 1-diphosphate: step 2/9. This is Phosphoribosyl-ATP pyrophosphatase from Saccharolobus islandicus (strain Y.N.15.51 / Yellowstone #2) (Sulfolobus islandicus).